We begin with the raw amino-acid sequence, 297 residues long: NAD(P)-dependent methylenetetrahydromethanopterin dehydrogenase (297 aa).

This sequence to M.extorquens MtdA. As to quaternary structure, homohexamer.

Its subcellular location is the cytoplasm. The catalysed reaction is 5,10-methylenetetrahydromethanopterin + NAD(+) = 5,10-methenyl-5,6,7,8-tetrahydromethanopterin + NADH. The enzyme catalyses 5,10-methylenetetrahydromethanopterin + NADP(+) = 5,10-methenyl-5,6,7,8-tetrahydromethanopterin + NADPH. It participates in one-carbon metabolism; formaldehyde degradation; formate from formaldehyde (H(4)MPT route): step 2/5. Catalyzes the dehydrogenation of methylene-H(4)MPT. The chain is NAD(P)-dependent methylenetetrahydromethanopterin dehydrogenase (mtdB) from Methylorubrum extorquens (strain ATCC 14718 / DSM 1338 / JCM 2805 / NCIMB 9133 / AM1) (Methylobacterium extorquens).